The primary structure comprises 217 residues: Probable GTP-binding protein EngB (217 aa).

In terms of domain architecture, EngB-type G spans 40 to 217 (DVPEIAFAGR…RAAVLQDAMG (178 aa)). Residues 48–55 (GRSNVGKS), 75–79 (GRTQE), 95–98 (DMPG), 162–165 (TKAD), and 196–198 (TSS) each bind GTP. The Mg(2+) site is built by serine 55 and threonine 77.

The protein belongs to the TRAFAC class TrmE-Era-EngA-EngB-Septin-like GTPase superfamily. EngB GTPase family. Mg(2+) is required as a cofactor.

Functionally, necessary for normal cell division and for the maintenance of normal septation. This chain is Probable GTP-binding protein EngB, found in Novosphingobium aromaticivorans (strain ATCC 700278 / DSM 12444 / CCUG 56034 / CIP 105152 / NBRC 16084 / F199).